The chain runs to 151 residues: Minor curlin subunit (151 aa).

Positions 1–21 (MKNKLLFMMLTILGAPGIATA) are cleaved as a signal peptide.

It belongs to the CsgA/CsgB family.

The protein resides in the fimbrium. Curlin is the structural subunit of the curli. Curli are coiled surface structures that assemble preferentially at growth temperatures below 37 degrees Celsius. Curli can bind to fibronectin. The minor subunit is the nucleation component of curlin monomers. This chain is Minor curlin subunit (csgB), found in Salmonella typhi.